Reading from the N-terminus, the 41-residue chain is Divisome-associated membrane protein Blr (41 aa).

Topologically, residues 1–3 (MNR) are cytoplasmic. The chain crosses the membrane as a helical span at residues 4–24 (LIELTGWIVLVVSVILLGVAS). Residues 25 to 41 (HIDNYQPPEQSASVQHK) lie on the Periplasmic side of the membrane.

In terms of assembly, interacts with FtsL and several other divisomal proteins, including FtsI, FtsK, FtsN, FtsQ, FtsW and YmgF. In terms of processing, the N-terminus is blocked.

The protein resides in the cell inner membrane. Component of the cell division machinery, which is probably involved in the stabilization of the divisome under certain stress conditions. The sequence is that of Divisome-associated membrane protein Blr (blr) from Escherichia coli (strain K12).